The primary structure comprises 262 residues: Putative hydro-lyase ROP_32680 (262 aa).

Belongs to the D-glutamate cyclase family.

This chain is Putative hydro-lyase ROP_32680, found in Rhodococcus opacus (strain B4).